The primary structure comprises 267 residues: Type III pantothenate kinase (267 aa).

6–13 (DVRNTHTT) contributes to the ATP binding site. 109–112 (GADR) is a binding site for substrate. Asp111 functions as the Proton acceptor in the catalytic mechanism. Asp131 contributes to the K(+) binding site. Ser134 serves as a coordination point for ATP. Thr186 provides a ligand contact to substrate.

This sequence belongs to the type III pantothenate kinase family. In terms of assembly, homodimer. It depends on NH4(+) as a cofactor. Requires K(+) as cofactor.

The protein resides in the cytoplasm. The enzyme catalyses (R)-pantothenate + ATP = (R)-4'-phosphopantothenate + ADP + H(+). The protein operates within cofactor biosynthesis; coenzyme A biosynthesis; CoA from (R)-pantothenate: step 1/5. In terms of biological role, catalyzes the phosphorylation of pantothenate (Pan), the first step in CoA biosynthesis. The sequence is that of Type III pantothenate kinase from Mycobacterium sp. (strain JLS).